The primary structure comprises 29 residues: Potassium channel toxin alpha-KTx 20.1 (29 aa).

Intrachain disulfides connect cysteine 2–cysteine 20, cysteine 7–cysteine 24, and cysteine 11–cysteine 26.

This sequence belongs to the short scorpion toxin superfamily. Potassium channel inhibitor family. Alpha-KTx 20 subfamily. As to expression, expressed by the venom gland.

The protein localises to the secreted. Reduces potassium currents through Kv1.2/KCNA2 and Kv1.3/KCNA3 voltage-gated potassium channels. The protein is Potassium channel toxin alpha-KTx 20.1 of Tityus trivittatus (Argentinean scorpion).